The chain runs to 271 residues: NAD kinase (271 aa).

The active-site Proton acceptor is D52. Residues 52–53 (DG), 129–130 (NE), R155, D157, and A192 contribute to the NAD(+) site.

This sequence belongs to the NAD kinase family. Requires a divalent metal cation as cofactor.

The protein localises to the cytoplasm. The catalysed reaction is NAD(+) + ATP = ADP + NADP(+) + H(+). Its function is as follows. Involved in the regulation of the intracellular balance of NAD and NADP, and is a key enzyme in the biosynthesis of NADP. Catalyzes specifically the phosphorylation on 2'-hydroxyl of the adenosine moiety of NAD to yield NADP. The chain is NAD kinase from Geobacillus stearothermophilus (Bacillus stearothermophilus).